A 211-amino-acid chain; its full sequence is uncharacterized protein (211 aa).

Disordered regions lie at residues 1-73 (MLRR…SKLK) and 96-123 (TNAA…ASLS). Composition is skewed to polar residues over residues 26–35 (SKSSLISLTS) and 53–62 (APSQFLSPTN). Over residues 63 to 73 (KRSTSSQSKLK) the composition is skewed to low complexity. Serine 182 is modified (phosphoserine). Threonine 184 is modified (phosphothreonine). At serine 186 the chain carries Phosphoserine.

This is an uncharacterized protein from Saccharomyces cerevisiae (strain ATCC 204508 / S288c) (Baker's yeast).